The sequence spans 429 residues: Adenylosuccinate synthetase (429 aa).

Residues 12 to 18 and 40 to 42 contribute to the GTP site; these read GDEGKGK and GHT. The Proton acceptor role is filled by Asp-13. Asp-13 and Gly-40 together coordinate Mg(2+). Residues 13-16, 38-41, Thr-128, Arg-142, Gln-223, Thr-238, and Arg-302 contribute to the IMP site; these read DEGK and NAGH. His-41 serves as the catalytic Proton donor. Position 298 to 304 (298 to 304) interacts with substrate; the sequence is VNTGRKR. GTP-binding positions include Arg-304, 330–332, and 412–414; these read KLD and GVG.

The protein belongs to the adenylosuccinate synthetase family. In terms of assembly, homodimer. The cofactor is Mg(2+).

Its subcellular location is the cytoplasm. It carries out the reaction IMP + L-aspartate + GTP = N(6)-(1,2-dicarboxyethyl)-AMP + GDP + phosphate + 2 H(+). It participates in purine metabolism; AMP biosynthesis via de novo pathway; AMP from IMP: step 1/2. In terms of biological role, plays an important role in the de novo pathway of purine nucleotide biosynthesis. Catalyzes the first committed step in the biosynthesis of AMP from IMP. This chain is Adenylosuccinate synthetase, found in Corynebacterium glutamicum (strain R).